A 222-amino-acid chain; its full sequence is N-(5'-phosphoribosyl)anthranilate isomerase (222 aa).

It belongs to the TrpF family.

The catalysed reaction is N-(5-phospho-beta-D-ribosyl)anthranilate = 1-(2-carboxyphenylamino)-1-deoxy-D-ribulose 5-phosphate. It participates in amino-acid biosynthesis; L-tryptophan biosynthesis; L-tryptophan from chorismate: step 3/5. This is N-(5'-phosphoribosyl)anthranilate isomerase from Rhizobium rhizogenes (strain K84 / ATCC BAA-868) (Agrobacterium radiobacter).